Here is a 2208-residue protein sequence, read N- to C-terminus: Glutamate synthase 1 [NADH], chloroplastic (2208 aa).

The N-terminal 49 residues, 1-49 (MSAASSSSVLHLRTNQQLLSLRSLKNSTSVASQLAVTSGVSRRRSCTAR), are a transit peptide targeting the chloroplast. Cys117 serves as the catalytic Nucleophile. One can recognise a Glutamine amidotransferase type-2 domain in the interval 117 to 521 (CGVGFVAELS…PGMMLLVDFE (405 aa)). The interval 1040 to 1067 (GKSNTGEGGELPSRMEPLADGSRNPKRS) is disordered. Position 1211–1268 (1211–1268 (LAETHQTLVANDLRGRTVLQTDGQLKTGRDVAVAALLGAEEFGFSTAPLITLGCIMMR)) interacts with FMN. [3Fe-4S] cluster contacts are provided by Cys1264, Cys1270, and Cys1275. 1995 to 2009 (GGGDTGTDCIGTSIR) is an NAD(+) binding site.

This sequence belongs to the glutamate synthase family. In terms of assembly, monomer. [3Fe-4S] cluster is required as a cofactor. FAD serves as cofactor. The cofactor is FMN. As to expression, highly expressed in roots and at low levels in leaves.

The protein localises to the plastid. Its subcellular location is the chloroplast. It carries out the reaction 2 L-glutamate + NAD(+) = L-glutamine + 2-oxoglutarate + NADH + H(+). The protein operates within amino-acid biosynthesis; L-glutamate biosynthesis via GLT pathway; L-glutamate from 2-oxoglutarate and L-glutamine (NAD(+) route): step 1/1. Its pathway is energy metabolism; nitrogen metabolism. Involved in glutamate biosynthesis. Required for non-photorespiratory ammonium assimilation. Probably involved in primary ammonium assimilation in roots. The polypeptide is Glutamate synthase 1 [NADH], chloroplastic (GLT1) (Arabidopsis thaliana (Mouse-ear cress)).